The primary structure comprises 421 residues: E3 ubiquitin-protein ligase MARCHF4 (421 aa).

Positions 1-16 (MLLAIGVIVWCWGLLS) are cleaved as a signal peptide. Residues 60–79 (ELNAEGNATSSATESHSLAN) are disordered. Over residues 65–77 (GNATSSATESHSL) the composition is skewed to polar residues. The RING-CH-type zinc finger occupies 135–195 (DSGVRTPLCR…ELCYYKYQVI (61 aa)). 8 residues coordinate Zn(2+): Cys-143, Cys-146, Cys-159, Cys-161, His-169, Cys-172, Cys-185, and Cys-188. 2 helical membrane-spanning segments follow: residues 218 to 238 (IAAA…LVWS) and 252 to 272 (LFQI…ALIV). Disordered regions lie at residues 319–385 (PLTH…LPDH) and 401–421 (QEPR…VTTV). Polar residues-rich tracts occupy residues 367 to 380 (TEPQ…NGQP) and 403 to 412 (PRGQTSNSNR).

The protein resides in the golgi apparatus membrane. The enzyme catalyses S-ubiquitinyl-[E2 ubiquitin-conjugating enzyme]-L-cysteine + [acceptor protein]-L-lysine = [E2 ubiquitin-conjugating enzyme]-L-cysteine + N(6)-ubiquitinyl-[acceptor protein]-L-lysine.. It participates in protein modification; protein ubiquitination. Functionally, E3 ubiquitin-protein ligase. E3 ubiquitin ligases accept ubiquitin from an E2 ubiquitin-conjugating enzyme in the form of a thioester and then directly transfer the ubiquitin to targeted substrates. This is E3 ubiquitin-protein ligase MARCHF4 (marchf4) from Danio rerio (Zebrafish).